A 276-amino-acid chain; its full sequence is Cell wall synthesis protein KRE9 (276 aa).

An N-terminal signal peptide occupies residues 1–21; that stretch reads MRLQRNSIICALVFLVSFVLG.

Belongs to the KRE9/KNH1 family. O-glycosylated.

The protein resides in the secreted. It localises to the cell wall. Its function is as follows. Involved in cell wall beta(1-&gt;6) glucan synthesis. This is Cell wall synthesis protein KRE9 from Saccharomyces cerevisiae (strain ATCC 204508 / S288c) (Baker's yeast).